The primary structure comprises 733 residues: Two pore calcium channel protein 1 (733 aa).

The residue at position 1 (Met-1) is an N-acetylmethionine. At 1–71 (MEDPLIGRDS…RYYFIFTRLD (71 aa)) the chain is on the cytoplasmic side. The helical transmembrane segment at 72 to 92 (LIWSLNYFALLFLNFFEQPLW) threads the bilayer. Topologically, residues 93–120 (CEKNPKPSCKDRDYYYLGELPYLTNAES) are vacuolar. The helical transmembrane segment at 121 to 141 (IIYEVITLAILLVHTFFPISY) threads the bilayer. The Cytoplasmic portion of the chain corresponds to 142-158 (EGSRIFWTSRLNLVKVA). A helical membrane pass occupies residues 159–179 (CVVILFVDVLVDFLYLSPLAF). A topological domain (vacuolar) is located at residue Asp-180. The chain crosses the membrane as a helical; Voltage-sensor span at residues 181–199 (FLPFRIAPYVRVIIFILSI). Over 200 to 218 (RELRDTLVLLSGMLGTYLN) the chain is Cytoplasmic. A helical membrane pass occupies residues 219–239 (ILALWMLFLLFASWIAFVMFE). The Vacuolar portion of the chain corresponds to 240–245 (DTQQGL). Positions 246–260 (TVFTSYGATLYQMFI) form an intramembrane region, pore-forming. The Vacuolar segment spans residues 261-282 (LFTTSNNPDVWIPAYKSSRWSS). The chain crosses the membrane as a helical span at residues 283–303 (VFFVLYVLIGVYFVTNLILAV). At 304-428 (VYDSFKEQLA…LSQQLRAFVR (125 aa)) the chain is on the cytoplasmic side. 2 EF-hand domains span residues 322–357 (MKRRMLEKAFGLIDSDKNGEIDKNQCIKLFEQLTNY) and 363–398 (ISKEEFGLIFDELDDTRDFKINKDEFADLCQAIALR). The chain crosses the membrane as a helical span at residues 429 to 449 (SPNFGYAISFILIINFIAVVV). The Vacuolar portion of the chain corresponds to 450–465 (ETTLDIEESSAQKPWQ). A helical transmembrane segment spans residues 466–486 (VAEFVFGWIYVLEMALKIYTY). Residues 487-498 (GFENYWREGANR) are Cytoplasmic-facing. Residues 499-519 (FDFLVTWVIVIGETATFITPD) traverse the membrane as a helical segment. At 520-528 (ENTFFSNGE) the chain is on the vacuolar side. The helical; Voltage-sensor transmembrane segment at 529–546 (WIRYLLLARMLRLIRLLM) threads the bilayer. The Cytoplasmic segment spans residues 547–557 (NVQRYRAFIAT). A helical membrane pass occupies residues 558–578 (FITLIPSLMPYLGTIFCVLCI). The Vacuolar segment spans residues 579–615 (YCSIGVQVFGGLVNAGNKKLFETELAEDDYLLFNFND). The pore-forming intramembrane region spans 616–630 (YPNGMVTLFNLLVMG). The Vacuolar portion of the chain corresponds to 631-651 (NWQVWMESYKDLTGTWWSITY). Residues 652 to 672 (FVSFYVITILLLLNLVVAFVL) form a helical membrane-spanning segment. Over 673–733 (EAFFTELDLE…SKPECSTSDT (61 aa)) the chain is Cytoplasmic. Over residues 686-695 (KCQGQDSQEK) the composition is skewed to basic and acidic residues. A disordered region spans residues 686 to 711 (KCQGQDSQEKRNRRRSAGSKSRSQRV).

This sequence belongs to the calcium channel alpha-1 subunit (TC 1.A.1.11) family. Two pore calcium channel subfamily. In terms of assembly, homodimer. In terms of tissue distribution, ubiquitously expressed.

It localises to the vacuole membrane. With respect to regulation, inhibited by Al(3+). Functions as a voltage-gated inward-rectifying Ca(2+) channel (VDCC) across the vacuole membrane. Is one of the essential components of the slow vacuolar (SV) channel. Acts as the major ROS-responsive Ca(2+) channel and is the possible target of Al-dependent inhibition. Involved in the regulation of germination and stomatal movement. This Arabidopsis thaliana (Mouse-ear cress) protein is Two pore calcium channel protein 1 (TPC1).